Reading from the N-terminus, the 250-residue chain is MRLLQVTALFFLLSNSLCRGENSKALTETSTTKASATTPDMVSITNKSTGGTPPKGTTNSATPKTPLMPALDSPTTPKHETTTRGVIKNEVSTIKTTVANPTISNAVSTLSSPQNKTENQSSIRTTEISGTNQLPDDQKPKTTETPSASLTTAKTISQIQDTEDGKITATTSTTPSYSSVILPVVIALIVITVLVFTLVGLYRICWKRDPGTPESGNDQPQSDKESVKLLTVKTISHESGEHSAQGKAKN.

The N-terminal stretch at 1-20 is a signal peptide; it reads MRLLQVTALFFLLSNSLCRG. 2 stretches are compositionally biased toward low complexity: residues 24 to 38 and 45 to 60; these read KALT…SATT and TNKS…TTNS. Disordered regions lie at residues 24 to 83 and 105 to 153; these read KALT…ETTT and NAVS…LTTA. 3 N-linked (GlcNAc...) asparagine glycosylation sites follow: Asn-46, Asn-115, and Asn-119. Polar residues-rich tracts occupy residues 105–135 and 143–153; these read NAVS…NQLP and TETPSASLTTA. The helical transmembrane segment at 180–200 threads the bilayer; the sequence is VILPVVIALIVITVLVFTLVG. Residues 210 to 250 form a disordered region; the sequence is PGTPESGNDQPQSDKESVKLLTVKTISHESGEHSAQGKAKN. Position 226 is a phosphoserine (Ser-226).

In terms of processing, highly O-glycosylated. Sialic acid-rich glycoprotein.

The protein localises to the membrane. Functionally, endothelial sialomucin, also called endomucin or mucin-like sialoglycoprotein, which interferes with the assembly of focal adhesion complexes and inhibits interaction between cells and the extracellular matrix. In Rattus norvegicus (Rat), this protein is Endomucin (Emcn).